Consider the following 329-residue polypeptide: Serine, glycine and glutamine-rich protein (329 aa).

A signal peptide spans 1–16 (MKTVLLFVVLVGLAYC). A compositionally biased stretch (low complexity) spans 38–48 (SSSSSSSSSSS). The tract at residues 38–80 (SSSSSSSSSSSSGGGGSSGGGASGGGGGSSSGGGGASGGGGGG) is disordered. Residues 49 to 80 (SGGGGSSGGGASGGGGGSSSGGGGASGGGGGG) show a composition bias toward gly residues.

As to expression, prismatic layer of shell (at protein level). Expressed primarily in the mantle with highest level in the mantle edge and lower level in the mantle pallium.

It localises to the secreted. The protein is Serine, glycine and glutamine-rich protein of Pinctada maxima (Silver-lipped pearl oyster).